Here is a 212-residue protein sequence, read N- to C-terminus: Thymidylate kinase (212 aa).

Residue 11–18 (GGEGVGKS) coordinates ATP.

This sequence belongs to the thymidylate kinase family.

It catalyses the reaction dTMP + ATP = dTDP + ADP. Phosphorylation of dTMP to form dTDP in both de novo and salvage pathways of dTTP synthesis. In Chromohalobacter salexigens (strain ATCC BAA-138 / DSM 3043 / CIP 106854 / NCIMB 13768 / 1H11), this protein is Thymidylate kinase.